A 356-amino-acid chain; its full sequence is Protein-L-isoaspartate O-methyltransferase domain-containing protein 1 (356 aa).

Gly-2 carries N-myristoyl glycine lipidation. Residue Ser-64 is part of the active site. AdoMet binding motif regions lie at residues 85–94 (LNLGSGTGYL), 160–164 (YDRIY), and 181–191 (LKVGGILVMPI). Residues 240-250 (VRNLQDLARIY) are BC-box. Residues 299–331 (PLDSEEDEKMEEDKEEEEKEPGEALKPEEPPQN) are disordered. Over residues 301–318 (DSEEDEKMEEDKEEEEKE) the composition is skewed to acidic residues. Over residues 319–331 (PGEALKPEEPPQN) the composition is skewed to basic and acidic residues. Positions 340–343 (LPLP) are CUL-box.

It belongs to the methyltransferase superfamily. L-isoaspartyl/D-aspartyl protein methyltransferase family. Component of the probable ECS(PCMTD1) E3 ubiquitin-protein ligase complex, at least composed of CUL5, ELOB, ELOC, RBX2 and PCMTD1. Interacts (via the BC-box) with ELOB and ELOC; the interaction is direct and stabilizes PCMTD1.

The protein localises to the cytoplasm. The protein resides in the membrane. Its function is as follows. Substrate recognition component of an ECS (Elongin BC-CUL5-SOCS-box protein) E3 ubiquitin ligase complex which mediates the ubiquitination and subsequent proteasomal degradation of target proteins. Specifically binds to the methyltransferase cofactor S-adenosylmethionine (AdoMet) via the N-terminal AdoMet binding motif, but does not display methyltransferase activity. May provide an alternate maintenance pathway for modified proteins by acting as a damage-specific E3 ubiquitin ligase adaptor protein. The polypeptide is Protein-L-isoaspartate O-methyltransferase domain-containing protein 1 (PCMTD1) (Bos taurus (Bovine)).